Here is a 298-residue protein sequence, read N- to C-terminus: Ribosomal protein L11 methyltransferase (298 aa).

Positions 152, 176, 198, and 236 each coordinate S-adenosyl-L-methionine.

The protein belongs to the methyltransferase superfamily. PrmA family.

The protein resides in the cytoplasm. The enzyme catalyses L-lysyl-[protein] + 3 S-adenosyl-L-methionine = N(6),N(6),N(6)-trimethyl-L-lysyl-[protein] + 3 S-adenosyl-L-homocysteine + 3 H(+). In terms of biological role, methylates ribosomal protein L11. The polypeptide is Ribosomal protein L11 methyltransferase (Polaromonas sp. (strain JS666 / ATCC BAA-500)).